We begin with the raw amino-acid sequence, 304 residues long: UDP-N-acetylenolpyruvoylglucosamine reductase (304 aa).

The 165-residue stretch at 34 to 198 (IGGKADFLVW…LEVVFALRPG (165 aa)) folds into the FAD-binding PCMH-type domain. Arg-177 is an active-site residue. The active-site Proton donor is Ser-227. Glu-297 is an active-site residue.

It belongs to the MurB family. The cofactor is FAD.

The protein localises to the cytoplasm. It carries out the reaction UDP-N-acetyl-alpha-D-muramate + NADP(+) = UDP-N-acetyl-3-O-(1-carboxyvinyl)-alpha-D-glucosamine + NADPH + H(+). It functions in the pathway cell wall biogenesis; peptidoglycan biosynthesis. Functionally, cell wall formation. The chain is UDP-N-acetylenolpyruvoylglucosamine reductase from Geobacillus kaustophilus (strain HTA426).